A 379-amino-acid polypeptide reads, in one-letter code: tRNA(Met) cytidine acetate ligase (379 aa).

ATP contacts are provided by residues 7 to 20, Gly-100, Asn-153, and Arg-178; that span reads ITEY…HQYH.

Belongs to the TmcAL family.

The protein resides in the cytoplasm. It carries out the reaction cytidine(34) in elongator tRNA(Met) + acetate + ATP = N(4)-acetylcytidine(34) in elongator tRNA(Met) + AMP + diphosphate. Catalyzes the formation of N(4)-acetylcytidine (ac(4)C) at the wobble position of elongator tRNA(Met), using acetate and ATP as substrates. First activates an acetate ion to form acetyladenylate (Ac-AMP) and then transfers the acetyl group to tRNA to form ac(4)C34. This chain is tRNA(Met) cytidine acetate ligase, found in Staphylococcus aureus (strain Mu3 / ATCC 700698).